The following is a 517-amino-acid chain: V-type proton ATPase subunit B (517 aa).

Ser4 bears the Phosphoserine mark. Lys14 participates in a covalent cross-link: Glycyl lysine isopeptide (Lys-Gly) (interchain with G-Cter in ubiquitin). Position 137 is a phosphoserine (Ser137). ATP is bound at residue Arg381. The interval Arg487–Ile517 is disordered. Residues Asp500 to Ser511 are compositionally biased toward basic and acidic residues. Ser503 and Ser504 each carry phosphoserine. Residue Lys508 forms a Glycyl lysine isopeptide (Lys-Gly) (interchain with G-Cter in ubiquitin) linkage. Ser511 is subject to Phosphoserine; by ATM or ATR. Position 515 is a phosphoserine (Ser515).

It belongs to the ATPase alpha/beta chains family. In terms of assembly, V-ATPase is a heteromultimeric enzyme composed of a peripheral catalytic V1 complex (components A to H) attached to an integral membrane V0 proton pore complex (components: a, c, c', c'', d, e, f and VOA1). Interacts with RAV1 and RAV2 components of the RAVE complex, which are essential for the stability and assembly of V-ATPase.

The protein localises to the vacuole membrane. Non-catalytic subunit of the V1 complex of vacuolar(H+)-ATPase (V-ATPase), a multisubunit enzyme composed of a peripheral complex (V1) that hydrolyzes ATP and a membrane integral complex (V0) that translocates protons. V-ATPase is responsible for acidifying and maintaining the pH of intracellular compartments. This is V-type proton ATPase subunit B (VMA2) from Saccharomyces cerevisiae (strain ATCC 204508 / S288c) (Baker's yeast).